The chain runs to 363 residues: Osmoprotective compounds uptake ATP-binding protein GgtA (363 aa).

The 231-residue stretch at Val-4–Ile-234 folds into the ABC transporter domain. Gly-36–Thr-43 provides a ligand contact to ATP.

Belongs to the ABC transporter superfamily. In terms of assembly, the complex is composed of two ATP-binding proteins (GgtA), two transmembrane proteins (GgtC and GgtD) and a solute-binding protein (GgtB).

Its subcellular location is the cell membrane. Functionally, part of the ABC transporter complex GgtABCD involved in the uptake of the osmoprotective compounds glucosylglycerol (GG), sucrose and trehalose. Responsible for energy coupling to the transport system. The chain is Osmoprotective compounds uptake ATP-binding protein GgtA from Synechocystis sp. (strain ATCC 27184 / PCC 6803 / Kazusa).